Reading from the N-terminus, the 132-residue chain is Small ribosomal subunit protein uS19 (132 aa).

It belongs to the universal ribosomal protein uS19 family.

Protein S19 forms a complex with S13 that binds strongly to the 16S ribosomal RNA. The sequence is that of Small ribosomal subunit protein uS19 (rps19) from Pyrococcus horikoshii (strain ATCC 700860 / DSM 12428 / JCM 9974 / NBRC 100139 / OT-3).